The sequence spans 346 residues: Serpentine receptor class beta-11 (346 aa).

Transmembrane regions (helical) follow at residues 26 to 46 (YQMIISFCSVFPLIYFLLFKL), 57 to 77 (TIFISYFVSLVAFSMTHLTTS), 102 to 122 (IWNFFILFFLTLSTFFPCSVT), 139 to 159 (SVVMGPILVGFNVLLNFCIIF), 186 to 206 (FTFFIIIFFVNLVDVIFDLIL), 239 to 259 (VFLILIHIISFGIYVSAVVFF), and 278 to 298 (TFSTTIVPTYNFVIGSFSSFF).

It belongs to the nematode receptor-like protein srb family.

The protein resides in the membrane. In Caenorhabditis elegans, this protein is Serpentine receptor class beta-11 (srb-11).